The sequence spans 215 residues: 3-demethoxyubiquinol 3-hydroxylase (215 aa).

E64, E94, H97, E146, E178, and H181 together coordinate Fe cation.

This sequence belongs to the COQ7 family. The cofactor is Fe cation.

It localises to the cell membrane. The catalysed reaction is a 5-methoxy-2-methyl-3-(all-trans-polyprenyl)benzene-1,4-diol + AH2 + O2 = a 3-demethylubiquinol + A + H2O. It functions in the pathway cofactor biosynthesis; ubiquinone biosynthesis. In terms of biological role, catalyzes the hydroxylation of 2-nonaprenyl-3-methyl-6-methoxy-1,4-benzoquinol during ubiquinone biosynthesis. This Stutzerimonas stutzeri (strain A1501) (Pseudomonas stutzeri) protein is 3-demethoxyubiquinol 3-hydroxylase.